A 383-amino-acid chain; its full sequence is Succinyl-diaminopimelate desuccinylase (383 aa).

His-73 lines the Zn(2+) pocket. The active site involves Asp-75. Asp-107 is a binding site for Zn(2+). The Proton acceptor role is filled by Glu-141. The Zn(2+) site is built by Glu-142, Glu-170, and His-356.

It belongs to the peptidase M20A family. DapE subfamily. In terms of assembly, homodimer. It depends on Zn(2+) as a cofactor. Co(2+) is required as a cofactor.

It carries out the reaction N-succinyl-(2S,6S)-2,6-diaminopimelate + H2O = (2S,6S)-2,6-diaminopimelate + succinate. It participates in amino-acid biosynthesis; L-lysine biosynthesis via DAP pathway; LL-2,6-diaminopimelate from (S)-tetrahydrodipicolinate (succinylase route): step 3/3. Its function is as follows. Catalyzes the hydrolysis of N-succinyl-L,L-diaminopimelic acid (SDAP), forming succinate and LL-2,6-diaminopimelate (DAP), an intermediate involved in the bacterial biosynthesis of lysine and meso-diaminopimelic acid, an essential component of bacterial cell walls. In Pseudomonas entomophila (strain L48), this protein is Succinyl-diaminopimelate desuccinylase.